A 292-amino-acid polypeptide reads, in one-letter code: N-acetylneuraminate lyase (292 aa).

Residues S46 and T47 each contribute to the aceneuramate site. The active-site Proton donor is Y135. K163 functions as the Schiff-base intermediate with substrate in the catalytic mechanism. Aceneuramate is bound by residues T165, G187, D189, E190, and S206.

Belongs to the DapA family. NanA subfamily. As to quaternary structure, homotetramer.

The protein localises to the cytoplasm. It carries out the reaction aceneuramate = aldehydo-N-acetyl-D-mannosamine + pyruvate. It participates in amino-sugar metabolism; N-acetylneuraminate degradation; D-fructose 6-phosphate from N-acetylneuraminate: step 1/5. Catalyzes the reversible aldol cleavage of N-acetylneuraminic acid (sialic acid; Neu5Ac) to form pyruvate and N-acetylmannosamine (ManNAc) via a Schiff base intermediate. This Lactiplantibacillus plantarum (strain ATCC BAA-793 / NCIMB 8826 / WCFS1) (Lactobacillus plantarum) protein is N-acetylneuraminate lyase.